Reading from the N-terminus, the 553-residue chain is Putative transport protein YidE (553 aa).

5 consecutive transmembrane segments (helical) span residues 4–24, 28–48, 65–85, 95–115, and 158–178; these read IALT…IGNI, GVGF…HFVD, FGLI…FFAS, LFAV…HKIF, and MSYA…MWLM. RCK C-terminal domains follow at residues 192–276 and 279–361; these read KHES…VIGK and DTSL…VVGN. A run of 6 helical transmembrane segments spans residues 371 to 391, 393 to 413, 437 to 457, 464 to 484, 493 to 513, and 533 to 553; these read MLPV…PLFV, GFPV…ALIL, LGIV…FVDT, LSWI…VGLL, YLTL…LAFA, and LVMF…WGMG.

The protein belongs to the AAE transporter (TC 2.A.81) family. YidE subfamily.

It localises to the cell membrane. The protein is Putative transport protein YidE of Salmonella heidelberg (strain SL476).